A 425-amino-acid polypeptide reads, in one-letter code: Spermatogenesis- and oogenesis-specific basic helix-loop-helix-containing protein 2 (425 aa).

The region spanning 201–252 is the bHLH domain; it reads KISLLHSSKEKLRRERIKYCCEQLRTLLPYVKGRKNDAASVLEATVDYVKYI.

In terms of assembly, forms both hetero- and homodimers with SOHLH1.

The protein resides in the nucleus. Its subcellular location is the cytoplasm. Its function is as follows. Transcription regulator of both male and female germline differentiation. Suppresses genes involved in spermatogonial stem cells maintenance, and induces genes important for spermatogonial differentiation. Coordinates oocyte differentiation without affecting meiosis I. The polypeptide is Spermatogenesis- and oogenesis-specific basic helix-loop-helix-containing protein 2 (SOHLH2) (Homo sapiens (Human)).